The chain runs to 83 residues: U-actitoxin-Aeq6a (83 aa).

The signal sequence occupies residues 1–20 (MIYKAVFVCLVLVLLGDVFC). The propeptide occupies 21 to 36 (SPRNSGGGTLNDNPFE). Pro82 carries the proline amide modification.

Contains 3 disulfide bonds. As to expression, expressed by acrorhagi.

Its subcellular location is the secreted. It is found in the nematocyst. Its function is as follows. Toxin. The sequence is that of U-actitoxin-Aeq6a from Actinia equina (Beadlet anemone).